A 122-amino-acid chain; its full sequence is Large ribosomal subunit protein uL14c (122 aa).

This sequence belongs to the universal ribosomal protein uL14 family. Part of the 50S ribosomal subunit.

It is found in the plastid. Its subcellular location is the chloroplast. Functionally, binds to 23S rRNA. This Citrus sinensis (Sweet orange) protein is Large ribosomal subunit protein uL14c.